The sequence spans 415 residues: Gamma-glutamyl phosphate reductase (415 aa).

Belongs to the gamma-glutamyl phosphate reductase family.

The protein resides in the cytoplasm. The enzyme catalyses L-glutamate 5-semialdehyde + phosphate + NADP(+) = L-glutamyl 5-phosphate + NADPH + H(+). It functions in the pathway amino-acid biosynthesis; L-proline biosynthesis; L-glutamate 5-semialdehyde from L-glutamate: step 2/2. Functionally, catalyzes the NADPH-dependent reduction of L-glutamate 5-phosphate into L-glutamate 5-semialdehyde and phosphate. The product spontaneously undergoes cyclization to form 1-pyrroline-5-carboxylate. This Shouchella clausii (strain KSM-K16) (Alkalihalobacillus clausii) protein is Gamma-glutamyl phosphate reductase.